A 206-amino-acid chain; its full sequence is Guanylate kinase (206 aa).

Residues 6 to 184 enclose the Guanylate kinase-like domain; the sequence is GNLFILSAPS…ALTDIETIVM (179 aa). 13-20 contributes to the ATP binding site; sequence APSGAGKS.

The protein belongs to the guanylate kinase family.

It is found in the cytoplasm. The catalysed reaction is GMP + ATP = GDP + ADP. Its function is as follows. Essential for recycling GMP and indirectly, cGMP. This is Guanylate kinase from Pseudoalteromonas translucida (strain TAC 125).